We begin with the raw amino-acid sequence, 206 residues long: MARYLGPKLKLSRREGTDLFLKSGVRAIDSKCKIDTAPGQHGARKPRLSDYGVQLREKQKVRRIYGILEKQFRNYYREATRLKGNTGENLLQLLEGRLDNVVYRMGFATTRAEARQLVSHKAIVVNGKVVNIPSSQVSPEDVVTVREKAKKQARIKAALDLAAQREKPTWIEINADKMEGVYKRLPERSDLSADINEQLIVELYSK.

An S4 RNA-binding domain is found at 96–156 (GRLDNVVYRM…EKAKKQARIK (61 aa)).

The protein belongs to the universal ribosomal protein uS4 family. Part of the 30S ribosomal subunit. Contacts protein S5. The interaction surface between S4 and S5 is involved in control of translational fidelity.

Functionally, one of the primary rRNA binding proteins, it binds directly to 16S rRNA where it nucleates assembly of the body of the 30S subunit. In terms of biological role, with S5 and S12 plays an important role in translational accuracy. This is Small ribosomal subunit protein uS4 from Tolumonas auensis (strain DSM 9187 / NBRC 110442 / TA 4).